The following is a 372-amino-acid chain: Mitogen-activated protein kinase kinase kinase 17 (372 aa).

The region spanning 3–259 (WTRGRILGRG…ATQLLNHPFL (257 aa)) is the Protein kinase domain. ATP-binding positions include 9 to 17 (LGRGSTATV) and K32. D126 (proton acceptor) is an active-site residue. S312 is subject to Phosphoserine.

The protein belongs to the protein kinase superfamily. Ser/Thr protein kinase family. In terms of assembly, binds to MKK3.

It is found in the nucleus. It catalyses the reaction L-seryl-[protein] + ATP = O-phospho-L-seryl-[protein] + ADP + H(+). The catalysed reaction is L-threonyl-[protein] + ATP = O-phospho-L-threonyl-[protein] + ADP + H(+). Its function is as follows. Component of the abscisic acid (ABA) signaling pathway that may act as ABA signal transducer in the context of abiotic stresses. Triggers MPK7 activation in a MKK3-dependent manner. Mediates the ABA-dependent activation of the MKK3-MPK7 module. This Arabidopsis thaliana (Mouse-ear cress) protein is Mitogen-activated protein kinase kinase kinase 17.